A 266-amino-acid chain; its full sequence is Chymotrypsin-like elastase family member 1 (266 aa).

The N-terminal stretch at 1–16 (MLRFLVFASLVLCGHS) is a signal peptide. Residues 17-26 (TEDVPETDAR) constitute a propeptide, activation peptide. In terms of domain architecture, Peptidase S1 spans 27–264 (VVGGAEARRN…YISWMNNVIA (238 aa)). An intrachain disulfide couples Cys-56 to Cys-72. Catalysis depends on His-71, which acts as the Charge relay system. The Ca(2+) site is built by Glu-85, Asn-87, Gln-90, and Glu-95. An N-linked (GlcNAc...) asparagine glycan is attached at Asn-87. Asp-119 (charge relay system) is an active-site residue. 3 cysteine pairs are disulfide-bonded: Cys-153-Cys-220, Cys-184-Cys-200, and Cys-210-Cys-240. Ser-214 acts as the Charge relay system in catalysis.

It belongs to the peptidase S1 family. Elastase subfamily. Ca(2+) serves as cofactor.

The protein resides in the secreted. The enzyme catalyses Hydrolysis of proteins, including elastin. Preferential cleavage: Ala-|-Xaa.. Serine proteases that hydrolyze many proteins in addition to elastin. The sequence is that of Chymotrypsin-like elastase family member 1 (Cela1) from Mus musculus (Mouse).